A 105-amino-acid chain; its full sequence is Ferredoxin--nitrite reductase, chloroplastic (105 aa).

Residues C28 and C32 each coordinate [4Fe-4S] cluster. C32 is a siroheme binding site.

The protein belongs to the nitrite and sulfite reductase 4Fe-4S domain family. In terms of assembly, monomer. Siroheme serves as cofactor. Requires [4Fe-4S] cluster as cofactor. In terms of tissue distribution, highest expression in roots and hypocotyls. Some expression in cotyledonary whorls.

The protein resides in the plastid. It localises to the chloroplast. It catalyses the reaction 6 oxidized [2Fe-2S]-[ferredoxin] + NH4(+) + 2 H2O = nitrite + 6 reduced [2Fe-2S]-[ferredoxin] + 8 H(+). It participates in nitrogen metabolism; nitrate reduction (assimilation). The chain is Ferredoxin--nitrite reductase, chloroplastic (NIR) from Pinus sylvestris (Scotch pine).